The sequence spans 488 residues: Acetyl-CoA decarbonylase/synthase complex subunit gamma (488 aa).

A 4Fe-4S domain is found at 1 to 61; it reads MPKKISAMDI…FEKNKKKIIE (61 aa). 4 residues coordinate [4Fe-4S] cluster: C19, C22, C27, and C44.

As to quaternary structure, heterodimer of delta and gamma chains. The ACDS complex is made up of alpha, epsilon, beta, gamma and delta chains with a probable stoichiometry of (alpha(2)epsilon(2))(4)-beta(8)-(gamma(1)delta(1))(8). The cofactor is corrinoid. It depends on [4Fe-4S] cluster as a cofactor.

The enzyme catalyses 5,6,7,8-tetrahydrosarcinapterin + methyl-Co(III)-[corrinoid Fe-S protein] = 5-methyltetrahydrosarcinapterin + Co(I)-[corrinoid Fe-S protein] + H(+). Its function is as follows. Part of a complex that catalyzes the reversible cleavage of acetyl-CoA, allowing autotrophic growth from CO(2). In Methanocaldococcus jannaschii (strain ATCC 43067 / DSM 2661 / JAL-1 / JCM 10045 / NBRC 100440) (Methanococcus jannaschii), this protein is Acetyl-CoA decarbonylase/synthase complex subunit gamma.